We begin with the raw amino-acid sequence, 789 residues long: Ataxin-1 (789 aa).

Over residues 1-30 (MKSNQERSNECLPPKKREIPATSRPSEEKA) the composition is skewed to basic and acidic residues. Positions 1–73 (MKSNQERSNE…GTSGEHGLQG (73 aa)) are disordered. A Glycyl lysine isopeptide (Lys-Gly) (interchain with G-Cter in SUMO) cross-link involves residue Lys-16. A phosphoserine mark is found at Ser-81 and Ser-87. Disordered regions lie at residues 188 to 237 (QAPG…RATS) and 296 to 397 (EVLN…KPGH). Lys-193 participates in a covalent cross-link: Glycyl lysine isopeptide (Lys-Gly) (interchain with G-Cter in SUMO). At Ser-213 the chain carries Phosphoserine. Position 217 is a phosphothreonine (Thr-217). Composition is skewed to polar residues over residues 218–235 (QQNQ…SGRA), 310–325 (ASSS…SSKS), and 360–386 (PNSS…TLND). Ser-228 bears the Phosphoserine mark. Residues 468 to 578 (VGSPDMDTPG…TEDFIQSAEI (111 aa)) are self-association. Residues 512–789 (LVTQAAYPAM…CIEGRSNVGK (278 aa)) are interaction with USP7. Residues 514-740 (TQAAYPAMVQ…FLTKIEPSKP (227 aa)) are RNA-binding. The region spanning 536 to 667 (SPAAASPTLP…SLTLKNLKNG (132 aa)) is the AXH domain. Glycyl lysine isopeptide (Lys-Gly) (interchain with G-Cter in SUMO) cross-links involve residues Lys-583, Lys-670, and Lys-719. The disordered stretch occupies residues 736 to 772 (EPSKPTATRKRRWSAPETRKLEKSEDEPPLTLPKPSL). Phosphoserine is present on Ser-749. Positions 768 to 771 (PKPS) match the Nuclear localization signal motif.

Belongs to the ATXN1 family. Homooligomer. Interacts with CIC. Interacts with ANP32A, PQBP1, UBQLN4, ATXN1L and USP7. Directly interacts with RBPJ; this interaction is disrupted in the presence of Notch intracellular domain. Competes with ATXN1L for RBPJ-binding. Found in a complex with CIC and ATXN1L. Post-translationally, ubiquitinated by UBE3A, leading to its degradation by the proteasome. Phosphorylation at Ser-749 increases the pathogenicity of proteins with an expanded polyglutamine tract. In terms of processing, sumoylation is dependent on nuclear localization and phosphorylation at Ser-749. It is reduced in the presence of an expanded polyglutamine tract.

It localises to the cytoplasm. The protein localises to the nucleus. Chromatin-binding factor that repress Notch signaling in the absence of Notch intracellular domain by acting as a CBF1 corepressor. Binds to the HEY promoter and might assist, along with NCOR2, RBPJ-mediated repression. Binds RNA in vitro. May be involved in RNA metabolism. In concert with CIC and ATXN1L, involved brain development. This Rattus norvegicus (Rat) protein is Ataxin-1 (Atxn1).